Here is a 746-residue protein sequence, read N- to C-terminus: WD repeat-containing protein 91 (746 aa).

A coiled-coil region spans residues Gln183–Gln215. Ser256 is modified (phosphoserine). The segment covering Leu265 to Pro278 has biased composition (low complexity). The disordered stretch occupies residues Leu265 to His336. Positions Pro282–Thr299 are enriched in polar residues. Phosphoserine is present on residues Ser288 and Ser293. WD repeat units lie at residues Glu405–Ala444, Ile447–Glu487, Ala514–Gln554, Pro559–Ser598, Ala601–Ser640, Val663–Glu701, and Gly708–Val746.

This sequence belongs to the WD repeat WDR91 family. Interacts with WDR81; involved in early to late endosome cargo transport. Interacts with BECN1; negatively regulates the PI3 kinase/PI3K activity associated with endosomal membranes.

It localises to the early endosome membrane. It is found in the late endosome membrane. Functionally, functions as a negative regulator of the PI3 kinase/PI3K activity associated with endosomal membranes via BECN1, a core subunit of the PI3K complex. By modifying the phosphatidylinositol 3-phosphate/PtdInsP3 content of endosomal membranes may regulate endosome fusion, recycling, sorting and early to late endosome transport. It is for instance, required for the delivery of cargos like BST2/tetherin from early to late endosome and thereby participates indirectly to their degradation by the lysosome. May play a role in meiosis. In Bos taurus (Bovine), this protein is WD repeat-containing protein 91.